A 227-amino-acid chain; its full sequence is Cytochrome c oxidase subunit 2 (227 aa).

Over 1–14 (MAYPFQLGLQDATS) the chain is Mitochondrial intermembrane. A helical membrane pass occupies residues 15-45 (PIMEELLHFHDHTLMIVFLISSLVLYIISLM). Residues 46–59 (LTTKLTHTSTMDAQ) are Mitochondrial matrix-facing. Residues 60–87 (EVETVWTILPAIILILIALPSLRILYMM) form a helical membrane-spanning segment. Residues 88–227 (DEINNPSLTV…YFETWSALMV (140 aa)) are Mitochondrial intermembrane-facing. Cu cation contacts are provided by His161, Cys196, Glu198, Cys200, His204, and Met207. A Mg(2+)-binding site is contributed by Glu198. Position 218 is a phosphotyrosine (Tyr218).

It belongs to the cytochrome c oxidase subunit 2 family. As to quaternary structure, component of the cytochrome c oxidase (complex IV, CIV), a multisubunit enzyme composed of 14 subunits. The complex is composed of a catalytic core of 3 subunits MT-CO1, MT-CO2 and MT-CO3, encoded in the mitochondrial DNA, and 11 supernumerary subunits COX4I, COX5A, COX5B, COX6A, COX6B, COX6C, COX7A, COX7B, COX7C, COX8 and NDUFA4, which are encoded in the nuclear genome. The complex exists as a monomer or a dimer and forms supercomplexes (SCs) in the inner mitochondrial membrane with NADH-ubiquinone oxidoreductase (complex I, CI) and ubiquinol-cytochrome c oxidoreductase (cytochrome b-c1 complex, complex III, CIII), resulting in different assemblies (supercomplex SCI(1)III(2)IV(1) and megacomplex MCI(2)III(2)IV(2)). Found in a complex with TMEM177, COA6, COX18, COX20, SCO1 and SCO2. Interacts with TMEM177 in a COX20-dependent manner. Interacts with COX20. Interacts with COX16. It depends on Cu cation as a cofactor.

It localises to the mitochondrion inner membrane. It catalyses the reaction 4 Fe(II)-[cytochrome c] + O2 + 8 H(+)(in) = 4 Fe(III)-[cytochrome c] + 2 H2O + 4 H(+)(out). Functionally, component of the cytochrome c oxidase, the last enzyme in the mitochondrial electron transport chain which drives oxidative phosphorylation. The respiratory chain contains 3 multisubunit complexes succinate dehydrogenase (complex II, CII), ubiquinol-cytochrome c oxidoreductase (cytochrome b-c1 complex, complex III, CIII) and cytochrome c oxidase (complex IV, CIV), that cooperate to transfer electrons derived from NADH and succinate to molecular oxygen, creating an electrochemical gradient over the inner membrane that drives transmembrane transport and the ATP synthase. Cytochrome c oxidase is the component of the respiratory chain that catalyzes the reduction of oxygen to water. Electrons originating from reduced cytochrome c in the intermembrane space (IMS) are transferred via the dinuclear copper A center (CU(A)) of subunit 2 and heme A of subunit 1 to the active site in subunit 1, a binuclear center (BNC) formed by heme A3 and copper B (CU(B)). The BNC reduces molecular oxygen to 2 water molecules using 4 electrons from cytochrome c in the IMS and 4 protons from the mitochondrial matrix. The protein is Cytochrome c oxidase subunit 2 (MT-CO2) of Canis adustus (Side-striped jackal).